Here is a 204-residue protein sequence, read N- to C-terminus: MPNKLPSLIIIMLTTFSIILISFIIRQLYLHIAQSYKNHDVNDITIVDRLGSILPYWLPLLEGLQNFGQQILPDYPFNVMQIYKKTLMPLVIFYVTHPTLAVIIFFILYYLFVRNKSPIPDRPFIRFNVLQSILLFLINSLLGATFRALPIEFRMSLYGLMMCNTLFWFVLSTISYSIIKSIEGKYAKIPVISQAVRIQIDNQL.

4 consecutive transmembrane segments (helical) span residues Leu5–Ile25, Leu87–Ile107, Ile133–Phe153, and Gly159–Ile179.

The protein belongs to the Tic20 family.

The protein resides in the plastid. Its subcellular location is the chloroplast membrane. This Gracilaria tenuistipitata var. liui (Red alga) protein is Tic20 family protein Ycf60 (ycf60).